The chain runs to 1025 residues: Multidrug resistance protein MdtC (1025 aa).

12 helical membrane-spanning segments follow: residues 3 to 23 (FFAL…AITL), 333 to 353 (EVEQ…FLFL), 360 to 380 (IIPA…MYLC), 387 to 407 (LSLM…IVVL), 431 to 451 (VGFT…PLLL), 463 to 483 (FAVT…TLTP), 528 to 548 (LVGV…ISIP), 853 to 873 (VILI…LYES), 875 to 895 (VHPL…LLAL), 897 to 917 (LFNA…IGIV), 953 to 973 (PIMM…LSGG), and 984 to 1004 (ITIV…TPVV).

This sequence belongs to the resistance-nodulation-cell division (RND) (TC 2.A.6) family. MdtC subfamily. In terms of assembly, part of a tripartite efflux system composed of MdtA, MdtB and MdtC. MdtC forms a heteromultimer with MdtB.

Its subcellular location is the cell inner membrane. The MdtABC tripartite complex confers resistance against novobiocin and deoxycholate. The sequence is that of Multidrug resistance protein MdtC from Escherichia coli (strain K12 / MC4100 / BW2952).